An 833-amino-acid polypeptide reads, in one-letter code: Urease (833 aa).

Positions 395–833 (GALDVHVHYI…LPLTRRYFVY (439 aa)) constitute a Urease domain. Ni(2+)-binding residues include His-400 and His-402. Residues His-402 and Ala-433 each coordinate urea. Position 483 (Lys-483) interacts with Ni(2+). Residue Lys-483 is modified to N6-carboxylysine. Positions 485 and 512 each coordinate urea. Ni(2+)-binding residues include His-512 and His-538. His-586 serves as the catalytic Proton donor. Asp-626 is a Ni(2+) binding site. Ala-629 is a urea binding site.

This sequence in the C-terminal section; belongs to the metallo-dependent hydrolases superfamily. Urease alpha subunit family. As to quaternary structure, homohexamer. It depends on Ni(2+) as a cofactor. Post-translationally, carboxylation allows a single lysine to coordinate two nickel ions.

The enzyme catalyses urea + 2 H2O + H(+) = hydrogencarbonate + 2 NH4(+). It functions in the pathway nitrogen metabolism; urea degradation; CO(2) and NH(3) from urea (urease route): step 1/1. The urease accessory proteins URE4, URE6 and URE7 are required for urease activity, URE7 supplying nickel for the functional urease. Its function is as follows. Plays a nutritional role via nitrogen acquisition in the environment. Contributes to the central nervous system invasion by enhancing yeast sequestration within microcapillary beds (such as within the brain) during hematogenous spread, thereby facilitating blood-to-brain invasion by C.neoformans. Affects fitness within the mammalian phagosome, promoting non-lytic exocytosis while delaying intracellular replication and thus reducing phagolysosomal membrane damage, events that could facilitate cryptococcal dissemination when transported inside macrophages. Urease activity is also associated with the regulation of key intracellular metabolic pathways, including melanin biosynthesis, polyamine biosynthesis, as well as intracellular levels of proline and reactive oxygen species. The sequence is that of Urease from Cryptococcus neoformans var. grubii serotype A (strain H99 / ATCC 208821 / CBS 10515 / FGSC 9487) (Filobasidiella neoformans var. grubii).